The sequence spans 117 residues: uncharacterized protein (117 aa).

The chain crosses the membrane as a helical span at residues methionine 1–serine 21. Residues leucine 38–lysine 67 are a coiled coil.

Its subcellular location is the cell membrane. This is an uncharacterized protein from Bacillus subtilis (strain 168).